The primary structure comprises 248 residues: MADS-box transcription factor 8 (248 aa).

The 61-residue stretch at methionine 1–glutamine 61 folds into the MADS-box domain. The region spanning valine 90–leucine 180 is the K-box domain.

In terms of assembly, may interact with the K-box of MADS6 and MADS16. May interact with MADS13 and MADS18. Binds to FCA. In terms of tissue distribution, expressed in lodicules, stamens and carpels.

It is found in the nucleus. Functionally, probable transcription factor. May be involved in the control of flowering time. This is MADS-box transcription factor 8 (MADS8) from Oryza sativa subsp. japonica (Rice).